The chain runs to 197 residues: Probable GTP-binding protein EngB (197 aa).

An EngB-type G domain is found at 26-197; the sequence is ELPEIALAGR…EAWDAILEKL (172 aa). GTP is bound by residues 34-41, 61-65, 79-82, 146-149, and 178-180; these read GRSNVGKS, GKTQL, DVPG, TKAD, and FSS. The Mg(2+) site is built by S41 and T63.

Belongs to the TRAFAC class TrmE-Era-EngA-EngB-Septin-like GTPase superfamily. EngB GTPase family. Requires Mg(2+) as cofactor.

In terms of biological role, necessary for normal cell division and for the maintenance of normal septation. In Streptococcus pneumoniae (strain CGSP14), this protein is Probable GTP-binding protein EngB.